A 756-amino-acid polypeptide reads, in one-letter code: Polyribonucleotide nucleotidyltransferase (756 aa).

2 residues coordinate Mg(2+): D547 and D553. Residues 613–672 (PRITSVTIPVNKIGELIGPKGKTINAITEETGADVSIEEDGTVYISAATGEAADAAIDRV) form the KH domain. The S1 motif domain occupies 684-753 (GERFLGTVVK…NRGKISLVPV (70 aa)).

The protein belongs to the polyribonucleotide nucleotidyltransferase family. The cofactor is Mg(2+).

It localises to the cytoplasm. It carries out the reaction RNA(n+1) + phosphate = RNA(n) + a ribonucleoside 5'-diphosphate. Its function is as follows. Involved in mRNA degradation. Catalyzes the phosphorolysis of single-stranded polyribonucleotides processively in the 3'- to 5'-direction. This chain is Polyribonucleotide nucleotidyltransferase, found in Corynebacterium aurimucosum (strain ATCC 700975 / DSM 44827 / CIP 107346 / CN-1) (Corynebacterium nigricans).